A 103-amino-acid chain; its full sequence is N(4)-acetylcytidine amidohydrolase (103 aa).

The region spanning 6–101 (ITFFQRFQDD…QTQFYVIEFK (96 aa)) is the ASCH domain. The active-site Proton acceptor is Lys21. Thr24 functions as the Nucleophile in the catalytic mechanism. Glu74 serves as the catalytic Proton donor.

It belongs to the N(4)-acetylcytidine amidohydrolase family.

It catalyses the reaction N(4)-acetylcytidine + H2O = cytidine + acetate + H(+). It carries out the reaction N(4)-acetyl-2'-deoxycytidine + H2O = 2'-deoxycytidine + acetate + H(+). The enzyme catalyses N(4)-acetylcytosine + H2O = cytosine + acetate + H(+). In terms of biological role, catalyzes the hydrolysis of N(4)-acetylcytidine (ac4C). The protein is N(4)-acetylcytidine amidohydrolase (yqfB) of Escherichia coli (strain K12 / MC4100 / BW2952).